The sequence spans 377 residues: Nitric oxide reductase FlRd-NAD(+) reductase (377 aa).

The protein belongs to the FAD-dependent oxidoreductase family. Requires FAD as cofactor.

The protein localises to the cytoplasm. The catalysed reaction is 2 reduced [nitric oxide reductase rubredoxin domain] + NAD(+) + H(+) = 2 oxidized [nitric oxide reductase rubredoxin domain] + NADH. The protein operates within nitrogen metabolism; nitric oxide reduction. Functionally, one of at least two accessory proteins for anaerobic nitric oxide (NO) reductase. Reduces the rubredoxin moiety of NO reductase. This is Nitric oxide reductase FlRd-NAD(+) reductase from Shigella flexneri serotype 5b (strain 8401).